The following is a 710-amino-acid chain: Interferon-induced GTP-binding protein Mx2 (710 aa).

Residues 1–51 form a disordered region; sequence MSMSFRPLKYKRHTQTSTQHHPKQDIYFHQQPPGPPLGQTMSPPQWQVEES. A compositionally biased stretch (polar residues) spans 39–50; that stretch reads QTMSPPQWQVEE. The Dynamin-type G domain occupies 112–383; sequence DLALPAIAVI…LIWHINKSLP (272 aa). The G1 motif stretch occupies residues 122 to 129; sequence GDQSSGKS. GTP is bound at residue 122 to 129; the sequence is GDQSSGKS. The tract at residues 147 to 149 is G2 motif; that stretch reads ITR. Residues 221 to 224 are G3 motif; that stretch reads DLPG. Residues 221-225 and 290-293 each bind GTP; these read DLPGI and TKPD. The G4 motif stretch occupies residues 290 to 293; that stretch reads TKPD. The G5 motif stretch occupies residues 322–325; that stretch reads KCRG. The region spanning 619–710 is the GED domain; the sequence is IVEIGVHLNA…ALYEFPHFKG (92 aa).

Belongs to the TRAFAC class dynamin-like GTPase superfamily. Dynamin/Fzo/YdjA family.

It is found in the cytoplasm. The protein localises to the nucleus. In terms of biological role, interferon-induced dynamin-like GTPase with antiviral activity against vesicular stomatitis virus (VSV). The polypeptide is Interferon-induced GTP-binding protein Mx2 (MX2) (Bos taurus (Bovine)).